The sequence spans 4080 residues: Hybrid PKS-NRPS synthetase poxE (4080 aa).

Positions 8 to 442 (REPIAIVGSG…GTNAHAIIEA (435 aa)) constitute a Ketosynthase family 3 (KS3) domain. Active-site for beta-ketoacyl synthase activity residues include cysteine 181, histidine 320, and histidine 362. Residues 554-878 (VFTGQGAQWA…QRGMNDVEAM (325 aa)) are malonyl-CoA:ACP transacylase (MAT) domain. Residues 944–1078 (HPILGTRCPD…GRLVITYGPV (135 aa)) form an N-terminal hotdog fold region. The region spanning 944 to 1246 (HPILGTRCPD…AVPLEATNAD (303 aa)) is the PKS/mFAS DH domain. The segment at 945 to 1243 (PILGTRCPDG…GIHAVPLEAT (299 aa)) is dehydratase (DH) domain. The active-site Proton acceptor; for dehydratase activity is the histidine 976. The interval 1093–1246 (MVDVPSERFY…AVPLEATNAD (154 aa)) is C-terminal hotdog fold. The active-site Proton donor; for dehydratase activity is aspartate 1152. Residues 1400–1585 (HFSDYLASVV…GVDTFTSDAD (186 aa)) form a methyltransferase (MT) domain region. The segment at 2118–2292 (TYWLVGLTGS…AGSVMNIGAI (175 aa)) is ketoreductase (KR)domain. Residues 2399–2478 (TTDEIYEVIK…TIGEIIKFVL (80 aa)) are peptidyl carrier protein. One can recognise a Carrier 1 domain in the interval 2405-2481 (EVIKECFIVK…EIIKFVLEKL (77 aa)). Position 2441 is an O-(pantetheine 4'-phosphoryl)serine (serine 2441). The interval 2488–2569 (SLGLSPPTGA…AASPSIHTEE (82 aa)) is disordered. The span at 2511–2525 (VVVERRNVPRLEKKI) shows a compositional bias: basic and acidic residues. Residues 2528–2545 (SAGSRTSSSVTGTSKSVS) show a composition bias toward low complexity. A compositionally biased stretch (polar residues) spans 2551–2565 (DTASSQTSEAASPSI). The condensation stretch occupies residues 2607 to 3036 (KEPLSFGQSR…DSKQPGGHVS (430 aa)). The adenylation stretch occupies residues 3069-3478 (DMAKQYPQKL…DGRLRIEGRI (410 aa)). The region spanning 3593–3673 (AHLNEAQAQM…KMALLIKPQE (81 aa)) is the Carrier 2 domain. The segment at 3598-3670 (AQAQMVQLWE…TLEKMALLIK (73 aa)) is thiolation. The residue at position 3633 (serine 3633) is an O-(pantetheine 4'-phosphoryl)serine. Positions 3740 to 3959 (LTGATGFIGQ…DFVPVEQVVR (220 aa)) are reductase (RED) domain.

This sequence in the C-terminal section; belongs to the NRP synthetase family.

It functions in the pathway secondary metabolite biosynthesis. Functionally, hybrid PKS-NRPS synthetase; part of the gene cluster that mediates the biosynthesis of oxaleimides, cytotoxic compounds containing an unusual disubstituted succinimide moiety. The first step of the pathway is provided by the HR-PKS poxF that serves in a new mode of collaborative biosynthesis with the PKS-NRPS poxE, by providing the olefin containing amino acid substrate via the synthesis of an ACP-bound dec-4-enoate. The cytochrome P450 monooxygenase poxM-catalyzed oxidation at the alpha-position creates the enzyme-bound 2-hydroxydec-4-enoyl-ACP thioester, which may be prone to spontaneous hydrolysis to yield 2-hydroxydec-4-enoic acid due to increased electrophilicity of the carbonyl. 2-hydroxydec-4-enoic acid can then be further oxidized by poxM to yield the alpha-ketoacid 2-oxodec-4-enoicacid, which is reductively aminated by the aminotransferase poxL to yield (S,E)-2-aminodec-4-enoic acid. The Hybrid PKS-NRPS synthetase poxE then performs condensation between the octaketide product of its PKS modules and the amino group of (S,E)-2-aminodec-4-enoic acid which is activated and incorporated by the adenylation domain. The resulting aminoacyl product can be cyclized by the Diels-Alderase PoxQ and reductively released by the reductive (R) domain of poxE to yield an aldehyde intermediate. The released aldehyde is then substrate for a Knoevenagel condensation by the hydrolyase poxO followed by an oxidation at the 5-position of the pyrrolidone ring. The presence of the olefin from the amino acid building block allows for migration of the substituted allyl group to occur. This allylic transposition reaction takes place in a conjugate addition, semipinacol-like fashion to yield a succinimide intermediate. Iterative two-electron oxidations of the C7 methyl of the succinimide intermediate to the carboxylic acid can be catalyzed by one of two remaining cytochrome P450 monooxygenasess poxC or poxD to yield oxaleimide A. Subsequent oxidation yields the maleimide scaffold oxaleimide I. Both oxaleimide A and oxaleimide I can undergo oxidative modifications in the decalin ring to yield the series of products oxaleimides B to H. This Penicillium oxalicum (strain 114-2 / CGMCC 5302) (Penicillium decumbens) protein is Hybrid PKS-NRPS synthetase poxE.